The primary structure comprises 397 residues: Elongation factor Tu (397 aa).

The region spanning 10 to 206 (KPHVNIGTIG…AVDENVPDPE (197 aa)) is the tr-type G domain. Residues 19–26 (GHVDHGKT) form a G1 region. 19 to 26 (GHVDHGKT) serves as a coordination point for GTP. T26 is a binding site for Mg(2+). Residues 62 to 66 (GITIQ) form a G2 region. Residues 83 to 86 (DAPG) form a G3 region. Residues 83-87 (DAPGH) and 138-141 (NKAD) contribute to the GTP site. Positions 138–141 (NKAD) are G4. The G5 stretch occupies residues 176 to 178 (SAL).

This sequence belongs to the TRAFAC class translation factor GTPase superfamily. Classic translation factor GTPase family. EF-Tu/EF-1A subfamily. As to quaternary structure, monomer.

It is found in the cytoplasm. The enzyme catalyses GTP + H2O = GDP + phosphate + H(+). Functionally, GTP hydrolase that promotes the GTP-dependent binding of aminoacyl-tRNA to the A-site of ribosomes during protein biosynthesis. This chain is Elongation factor Tu, found in Saccharopolyspora erythraea (strain ATCC 11635 / DSM 40517 / JCM 4748 / NBRC 13426 / NCIMB 8594 / NRRL 2338).